The chain runs to 309 residues: Sporulation sigma-E factor-processing peptidase (309 aa).

5 helical membrane-spanning segments follow: residues 7–27 (VIWL…AFIL), 36–55 (LVGG…TPFS), 61–78 (PAGK…TFGF), 88–105 (LFSF…IIGA), and 130–147 (PISW…WFFS). Residue Asp-183 is part of the active site.

This sequence belongs to the peptidase U4 family. Self-associates. Interacts with SigE. Interacts with SpoIIR.

It is found in the cell membrane. In terms of biological role, probable aspartic protease that is responsible for the proteolytic cleavage of the RNA polymerase sigma E factor (SigE/spoIIGB) to yield the active peptide in the mother cell during sporulation. Responds to a signal from the forespore that is triggered by the extracellular signal protein SpoIIR. This is Sporulation sigma-E factor-processing peptidase (spoIIGA) from Bacillus subtilis (strain 168).